A 767-amino-acid chain; its full sequence is Photosystem I P700 chlorophyll a apoprotein A1 (767 aa).

Helical transmembrane passes span 72–95 (IFSA…FHGA), 158–181 (LMSL…FHYH), 197–221 (LNHH…HVSL), 305–323 (IAHH…GHMY), 364–387 (WHAQ…QHMY), 403–429 (IGLF…IAMI), 451–473 (ALIS…LYIH), and 548–566 (FMVH…LILL). Positions 590 and 599 each coordinate [4Fe-4S] cluster. 2 consecutive transmembrane segments (helical) span residues 606-627 (HVFL…HFSW) and 681-703 (TSAY…MFLF). Position 692 (histidine 692) interacts with chlorophyll a'. Positions 700 and 708 each coordinate chlorophyll a. Phylloquinone is bound at residue tryptophan 709. A helical membrane pass occupies residues 741 to 761 (AVGVAHYLLGGIATTWAFFHA).

The protein belongs to the PsaA/PsaB family. In terms of assembly, the PsaA/B heterodimer binds the P700 chlorophyll special pair and subsequent electron acceptors. PSI consists of a core antenna complex that captures photons, and an electron transfer chain that converts photonic excitation into a charge separation. The cyanobacterial PSI reaction center is composed of one copy each of PsaA,B,C,D,E,F,I,J,K,L,M and X, and forms trimeric complexes. PSI electron transfer chain: 5 chlorophyll a, 1 chlorophyll a', 2 phylloquinones and 3 4Fe-4S clusters. PSI core antenna: 90 chlorophyll a, 22 carotenoids, 3 phospholipids and 1 galactolipid. P700 is a chlorophyll a/chlorophyll a' dimer, A0 is one or more chlorophyll a, A1 is one or both phylloquinones and FX is a shared 4Fe-4S iron-sulfur center. is required as a cofactor.

It localises to the cellular thylakoid membrane. The catalysed reaction is reduced [plastocyanin] + hnu + oxidized [2Fe-2S]-[ferredoxin] = oxidized [plastocyanin] + reduced [2Fe-2S]-[ferredoxin]. Its function is as follows. PsaA and PsaB bind P700, the primary electron donor of photosystem I (PSI), as well as the electron acceptors A0, A1 and FX. PSI is a plastocyanin/cytochrome c6-ferredoxin oxidoreductase, converting photonic excitation into a charge separation, which transfers an electron from the donor P700 chlorophyll pair to the spectroscopically characterized acceptors A0, A1, FX, FA and FB in turn. Oxidized P700 is reduced on the lumenal side of the thylakoid membrane by plastocyanin or cytochrome c6. In Synechococcus sp. (strain WH7803), this protein is Photosystem I P700 chlorophyll a apoprotein A1.